We begin with the raw amino-acid sequence, 114 residues long: Superoxide dismutase [Cu-Zn] (114 aa).

Residues His-37, His-39, and His-54 each contribute to the Cu cation site. A disordered region spans residues 49 to 73; sequence MSSGPHYNPRNKEHGAPTDENRHLG. 4 residues coordinate Zn(2+): His-54, His-62, His-71, and Asp-74. The span at 58–73 shows a compositional bias: basic and acidic residues; that stretch reads RNKEHGAPTDENRHLG. His-111 contacts Cu cation.

Belongs to the Cu-Zn superoxide dismutase family. Homodimer. Requires Cu cation as cofactor. The cofactor is Zn(2+).

Its subcellular location is the cytoplasm. It carries out the reaction 2 superoxide + 2 H(+) = H2O2 + O2. In terms of biological role, destroys radicals which are normally produced within the cells and which are toxic to biological systems. This is Superoxide dismutase [Cu-Zn] from Drosophila madeirensis (Fruit fly).